A 502-amino-acid polypeptide reads, in one-letter code: Glycerol kinase (502 aa).

Threonine 14 is a binding site for ADP. 3 residues coordinate ATP: threonine 14, threonine 15, and serine 16. Threonine 14 is a sn-glycerol 3-phosphate binding site. ADP is bound at residue arginine 18. Residues arginine 84, glutamate 85, tyrosine 137, and aspartate 247 each coordinate sn-glycerol 3-phosphate. Glycerol-binding residues include arginine 84, glutamate 85, tyrosine 137, aspartate 247, and glutamine 248. Threonine 269 and glycine 312 together coordinate ADP. Residues threonine 269, glycine 312, glutamine 316, and glycine 413 each contribute to the ATP site. Residues glycine 413 and asparagine 417 each coordinate ADP.

It belongs to the FGGY kinase family. Homotetramer and homodimer (in equilibrium). Heterodimer with EIIA-Glc. Binds 1 zinc ion per glycerol kinase EIIA-Glc dimer. The zinc ion is important for dimerization.

The enzyme catalyses glycerol + ATP = sn-glycerol 3-phosphate + ADP + H(+). It participates in polyol metabolism; glycerol degradation via glycerol kinase pathway; sn-glycerol 3-phosphate from glycerol: step 1/1. Its activity is regulated as follows. Activity of this regulatory enzyme is affected by several metabolites. Allosterically and non-competitively inhibited by fructose 1,6-bisphosphate (FBP) and unphosphorylated phosphocarrier protein EIIA-Glc (III-Glc), an integral component of the bacterial phosphotransferase (PTS) system. In terms of biological role, key enzyme in the regulation of glycerol uptake and metabolism. Catalyzes the phosphorylation of glycerol to yield sn-glycerol 3-phosphate. The protein is Glycerol kinase of Photorhabdus laumondii subsp. laumondii (strain DSM 15139 / CIP 105565 / TT01) (Photorhabdus luminescens subsp. laumondii).